A 601-amino-acid polypeptide reads, in one-letter code: Elongation factor 4 (601 aa).

The tr-type G domain maps to 7–189; it reads DRIRNFSIIA…ALVTRLPAPK (183 aa). Residues 19 to 24 and 136 to 139 contribute to the GTP site; these read DHGKST and NKVD.

It belongs to the TRAFAC class translation factor GTPase superfamily. Classic translation factor GTPase family. LepA subfamily.

It is found in the cell inner membrane. The catalysed reaction is GTP + H2O = GDP + phosphate + H(+). Functionally, required for accurate and efficient protein synthesis under certain stress conditions. May act as a fidelity factor of the translation reaction, by catalyzing a one-codon backward translocation of tRNAs on improperly translocated ribosomes. Back-translocation proceeds from a post-translocation (POST) complex to a pre-translocation (PRE) complex, thus giving elongation factor G a second chance to translocate the tRNAs correctly. Binds to ribosomes in a GTP-dependent manner. The sequence is that of Elongation factor 4 from Granulibacter bethesdensis (strain ATCC BAA-1260 / CGDNIH1).